The sequence spans 476 residues: Ureidoglycolate hydrolase (476 aa).

The first 25 residues, 1 to 25, serve as a signal peptide directing secretion; it reads MESLKRFLCSIALLLISLLLPSSLA. The Mn(2+) site is built by His-138, Asp-149, Glu-184, and His-254. Residues 183-184, 254-257, His-290, Asn-340, Arg-353, 423-424, and His-448 each bind substrate; these read EE, HIEQ, and YH. The tract at residues 276–391 is involved in dimerization; the sequence is APASLKVEFE…LSEFKIVNQD (116 aa). His-448 lines the Mn(2+) pocket.

Belongs to the peptidase M20 family. In terms of assembly, homodimer. The cofactor is Mn(2+). Ni(2+) is required as a cofactor. Requires Co(2+) as cofactor.

The protein resides in the endoplasmic reticulum. The enzyme catalyses (S)-ureidoglycolate + H2O + 2 H(+) = glyoxylate + 2 NH4(+) + CO2. The protein operates within nitrogen metabolism; (S)-allantoin degradation; glyoxylate from (S)-ureidoglycolate: step 1/1. Its function is as follows. Involved in the catabolism of purine nucleotides. Can use (S)-ureidoglycolate as substrate, but not (R)-ureidoglycolate or allantoate. The sequential activity of AAH, UGLYAH and UAH allows a complete purine breakdown without the intermediate generation of urea. This is Ureidoglycolate hydrolase from Arabidopsis thaliana (Mouse-ear cress).